The primary structure comprises 650 residues: Fructose-1,6-bisphosphatase class 3 (650 aa).

It belongs to the FBPase class 3 family. Requires Mn(2+) as cofactor.

The enzyme catalyses beta-D-fructose 1,6-bisphosphate + H2O = beta-D-fructose 6-phosphate + phosphate. The protein operates within carbohydrate biosynthesis; gluconeogenesis. The sequence is that of Fructose-1,6-bisphosphatase class 3 from Staphylococcus saprophyticus subsp. saprophyticus (strain ATCC 15305 / DSM 20229 / NCIMB 8711 / NCTC 7292 / S-41).